The following is a 296-amino-acid chain: GTP cyclohydrolase FolE2 (296 aa).

Belongs to the GTP cyclohydrolase IV family.

The catalysed reaction is GTP + H2O = 7,8-dihydroneopterin 3'-triphosphate + formate + H(+). The protein operates within cofactor biosynthesis; 7,8-dihydroneopterin triphosphate biosynthesis; 7,8-dihydroneopterin triphosphate from GTP: step 1/1. In terms of biological role, converts GTP to 7,8-dihydroneopterin triphosphate. This chain is GTP cyclohydrolase FolE2, found in Ectopseudomonas mendocina (strain ymp) (Pseudomonas mendocina).